Reading from the N-terminus, the 233-residue chain is Modulator of macroautophagy TMEM150B (233 aa).

The Cytoplasmic portion of the chain corresponds to Met-1 to Leu-7. Residues Met-8–Val-28 form a helical membrane-spanning segment. Residues Thr-29–Gln-51 are Extracellular-facing. N-linked (GlcNAc...) asparagine glycosylation occurs at Asn-30. Residues Ser-52 to Val-72 form a helical membrane-spanning segment. At Arg-73–Arg-84 the chain is on the cytoplasmic side. A helical membrane pass occupies residues Trp-85–Gly-105. Residues Asn-106–His-116 lie on the Extracellular side of the membrane. Residues Leu-117 to Leu-137 form a helical membrane-spanning segment. Residues Trp-138 to Arg-155 lie on the Cytoplasmic side of the membrane. The chain crosses the membrane as a helical span at residues Leu-156–Ser-176. Residues Leu-177–Glu-185 are Extracellular-facing. A helical membrane pass occupies residues Trp-186–Leu-206. The Cytoplasmic segment spans residues Glu-207–Leu-233.

Belongs to the DRAM/TMEM150 family. As to expression, highly expressed in the colon and lung with comparatively high levels also detectable in the lymph nodes, placenta, duodenum, peripheral blood mononuclear cells and spleen.

It localises to the cell membrane. It is found in the endosome membrane. The protein resides in the cytoplasmic vesicle. The protein localises to the autophagosome membrane. Functionally, modulator of macroautophagy that causes accumulation of autophagosomes under basal conditions and enhances autophagic flux. Represses cell death and promotes long-term clonogenic survival of cells grown in the absence of glucose in a macroautophagy-independent manner. May have some role in extracellular matrix engulfment or growth factor receptor recycling, both of which can modulate cell survival. In Homo sapiens (Human), this protein is Modulator of macroautophagy TMEM150B.